The chain runs to 286 residues: Energy-coupling factor transporter ATP-binding protein EcfA2 (286 aa).

The ABC transporter domain maps to 3 to 246; the sequence is IRFDNVSYTY…KEKLADWHIA (244 aa). Residue 40–47 participates in ATP binding; the sequence is GQTGSGKS.

Belongs to the ABC transporter superfamily. Energy-coupling factor EcfA family. Forms a stable energy-coupling factor (ECF) transporter complex composed of 2 membrane-embedded substrate-binding proteins (S component), 2 ATP-binding proteins (A component) and 2 transmembrane proteins (T component).

Its subcellular location is the cell membrane. ATP-binding (A) component of a common energy-coupling factor (ECF) ABC-transporter complex. Unlike classic ABC transporters this ECF transporter provides the energy necessary to transport a number of different substrates. This Staphylococcus aureus (strain bovine RF122 / ET3-1) protein is Energy-coupling factor transporter ATP-binding protein EcfA2.